The chain runs to 173 residues: dCTP deaminase, dUMP-forming (173 aa).

DCTP-binding positions include 93-98, D111, 119-121, Q138, and Y151; these read RSSIGR and TLE. Residue E121 is the Proton donor/acceptor of the active site.

The protein belongs to the dCTP deaminase family. In terms of assembly, homotrimer.

It catalyses the reaction dCTP + 2 H2O = dUMP + NH4(+) + diphosphate. It functions in the pathway pyrimidine metabolism; dUMP biosynthesis; dUMP from dCTP: step 1/1. Bifunctional enzyme that catalyzes both the deamination of dCTP to dUTP and the hydrolysis of dUTP to dUMP without releasing the toxic dUTP intermediate. The polypeptide is dCTP deaminase, dUMP-forming (Clostridium acetobutylicum (strain ATCC 824 / DSM 792 / JCM 1419 / IAM 19013 / LMG 5710 / NBRC 13948 / NRRL B-527 / VKM B-1787 / 2291 / W)).